The primary structure comprises 451 residues: Exodeoxyribonuclease 7 large subunit (451 aa).

Belongs to the XseA family. In terms of assembly, heterooligomer composed of large and small subunits.

The protein resides in the cytoplasm. The enzyme catalyses Exonucleolytic cleavage in either 5'- to 3'- or 3'- to 5'-direction to yield nucleoside 5'-phosphates.. In terms of biological role, bidirectionally degrades single-stranded DNA into large acid-insoluble oligonucleotides, which are then degraded further into small acid-soluble oligonucleotides. The protein is Exodeoxyribonuclease 7 large subunit of Thiobacillus denitrificans (strain ATCC 25259 / T1).